A 428-amino-acid polypeptide reads, in one-letter code: Elongation factor 1-alpha (428 aa).

In terms of domain architecture, tr-type G spans 5–217 (KPHVNIVFIG…DQIPEPEKPT (213 aa)). The segment at 14–21 (GHVDHGKS) is G1. GTP is bound at residue 14-21 (GHVDHGKS). Serine 21 is a binding site for Mg(2+). A G2 region spans residues 68–72 (GITID). The segment at 89–92 (DAPG) is G3. Residues 89-93 (DAPGH) and 144-147 (NKMD) contribute to the GTP site. Residues 144–147 (NKMD) form a G4 region. The interval 181–183 (SAW) is G5.

The protein belongs to the TRAFAC class translation factor GTPase superfamily. Classic translation factor GTPase family. EF-Tu/EF-1A subfamily.

It is found in the cytoplasm. It carries out the reaction GTP + H2O = GDP + phosphate + H(+). Its function is as follows. GTP hydrolase that promotes the GTP-dependent binding of aminoacyl-tRNA to the A-site of ribosomes during protein biosynthesis. This is Elongation factor 1-alpha from Thermococcus sibiricus (strain DSM 12597 / MM 739).